A 236-amino-acid chain; its full sequence is Aminopyrimidine aminohydrolase (236 aa).

Asp44 contacts substrate. Cys135 functions as the Nucleophile in the catalytic mechanism. Substrate contacts are provided by Tyr139 and Tyr163. Residue Glu205 is the Proton donor of the active site.

It belongs to the TenA family. Homotetramer.

The enzyme catalyses 4-amino-5-aminomethyl-2-methylpyrimidine + H2O = 4-amino-5-hydroxymethyl-2-methylpyrimidine + NH4(+). It catalyses the reaction thiamine + H2O = 5-(2-hydroxyethyl)-4-methylthiazole + 4-amino-5-hydroxymethyl-2-methylpyrimidine + H(+). It functions in the pathway cofactor biosynthesis; thiamine diphosphate biosynthesis. Catalyzes an amino-pyrimidine hydrolysis reaction at the C5' of the pyrimidine moiety of thiamine compounds, a reaction that is part of a thiamine salvage pathway. Thus, catalyzes the conversion of 4-amino-5-aminomethyl-2-methylpyrimidine to 4-amino-5-hydroxymethyl-2-methylpyrimidine (HMP). To a lesser extent, is also able to catalyze the hydrolytic cleavage of thiamine; however, this thiaminase activity is unlikely to be physiologically relevant. Therefore, is involved in the regeneration of the thiamine pyrimidine from thiamine degraded products present in the environment, rather than in thiamine degradation. This chain is Aminopyrimidine aminohydrolase, found in Bacillus subtilis (strain 168).